The sequence spans 427 residues: Cyclic 2,3-diphosphoglycerate synthetase (427 aa).

It belongs to the cyclic 2,3-diphosphoglycerate synthetase family.

It is found in the cytoplasm. It carries out the reaction (2R)-2,3-bisphosphoglycerate + ATP + H(+) = cyclic (2R)-2,3-bisphosphoglycerate + ADP + phosphate. In terms of biological role, catalyzes the formation of cyclic 2,3-diphosphoglycerate (cDPG) by formation of an intramolecular phosphoanhydride bond at the expense of ATP. The protein is Cyclic 2,3-diphosphoglycerate synthetase of Pyrococcus abyssi (strain GE5 / Orsay).